A 551-amino-acid polypeptide reads, in one-letter code: Arginine--tRNA ligase (551 aa).

Positions 123–133 match the 'HIGH' region motif; it reads ANPTGPLTIGR.

This sequence belongs to the class-I aminoacyl-tRNA synthetase family. Monomer.

It localises to the cytoplasm. The enzyme catalyses tRNA(Arg) + L-arginine + ATP = L-arginyl-tRNA(Arg) + AMP + diphosphate. This is Arginine--tRNA ligase from Chlorobaculum parvum (strain DSM 263 / NCIMB 8327) (Chlorobium vibrioforme subsp. thiosulfatophilum).